Consider the following 316-residue polypeptide: Tetrahydromethanopterin S-methyltransferase subunit H (316 aa).

Belongs to the MtrH family. As to quaternary structure, the complex is composed of 8 subunits; MtrA, MtrB, MtrC, MtrD, MtrE, MtrF, MtrG and MtrH.

The enzyme catalyses 5-methyl-5,6,7,8-tetrahydromethanopterin + coenzyme M + 2 Na(+)(in) = 5,6,7,8-tetrahydromethanopterin + methyl-coenzyme M + 2 Na(+)(out). It functions in the pathway one-carbon metabolism; methanogenesis from CO(2); methyl-coenzyme M from 5,10-methylene-5,6,7,8-tetrahydromethanopterin: step 2/2. Its function is as follows. Part of a complex that catalyzes the formation of methyl-coenzyme M and tetrahydromethanopterin from coenzyme M and methyl-tetrahydromethanopterin. This is an energy-conserving, sodium-ion translocating step. MtrH catalyzes the transfer of the methyl group from methyl-tetrahydromethanopterin to the corrinoid prosthetic group of MtrA. This Methanosarcina acetivorans (strain ATCC 35395 / DSM 2834 / JCM 12185 / C2A) protein is Tetrahydromethanopterin S-methyltransferase subunit H.